We begin with the raw amino-acid sequence, 468 residues long: 6-phosphogluconate dehydrogenase, NAD(+)-dependent, decarboxylating (468 aa).

Residues G9–G14, N32–T34, V73–A75, and N101 contribute to the NAD(+) site. Substrate-binding positions include N101 and S127 to G129. Catalysis depends on K181, which acts as the Proton acceptor. H184–N185 contacts substrate. The active-site Proton donor is E188. Substrate contacts are provided by Y189, K259, R286, R445, and H451.

The protein belongs to the 6-phosphogluconate dehydrogenase family. Homodimer.

It carries out the reaction 6-phospho-D-gluconate + NAD(+) = D-ribulose 5-phosphate + CO2 + NADH. Catalyzes the oxidative decarboxylation of 6-phosphogluconate to ribulose 5-phosphate and CO(2), with concomitant reduction of NAD to NADH. Does not contribute to oxidative pentose phosphate (PP) pathway fluxes during growth on glucose. The functional role of GntZ remains obscure. The protein is 6-phosphogluconate dehydrogenase, NAD(+)-dependent, decarboxylating (gntZ) of Bacillus subtilis (strain 168).